A 101-amino-acid chain; its full sequence is Apolipoprotein C-II (101 aa).

A signal peptide spans 1–22; it reads MGIRYLLVLVLVLLVLGCEVQG. The interval 66–74 is lipid binding; that stretch reads TMDEKIREI. The segment at 78 to 101 is lipoprotein lipase cofactor; sequence STAAVSTYAGIFTDQLLSMLKGDQ.

This sequence belongs to the apolipoprotein C2 family. Proapolipoprotein C-II is synthesized as a sialic acid containing glycoprotein which is subsequently desialylated prior to its proteolytic processing. Post-translationally, proapolipoprotein C-II, the major form found in plasma undergoes proteolytic cleavage of its N-terminal hexapeptide to generate apolipoprotein C-II, which occurs as the minor form in plasma.

Its subcellular location is the secreted. Its function is as follows. Component of chylomicrons, very low-density lipoproteins (VLDL), low-density lipoproteins (LDL), and high-density lipoproteins (HDL) in plasma. Plays an important role in lipoprotein metabolism as an activator of lipoprotein lipase. Both proapolipoprotein C-II and apolipoprotein C-II can activate lipoprotein lipase. This Phoca vitulina (Harbor seal) protein is Apolipoprotein C-II (APOC2).